A 533-amino-acid polypeptide reads, in one-letter code: Beta-1,4 N-acetylgalactosaminyltransferase 1 (533 aa).

At 1–7 (MWLGRRA) the chain is on the cytoplasmic side. Residues 8–25 (LCALVLLLACASLGLLYA) traverse the membrane as a helical; Signal-anchor for type II membrane protein segment. Over 26–533 (STRDAPGLRL…KHRLQCMTSQ (508 aa)) the chain is Lumenal. Asn-79, Asn-179, and Asn-274 each carry an N-linked (GlcNAc...) asparagine glycan. A disulfide bridge links Cys-429 with Cys-476.

It belongs to the glycosyltransferase 2 family. Homodimer; disulfide-linked.

It localises to the golgi apparatus membrane. The enzyme catalyses a ganglioside GM3 (d18:1(4E)) + UDP-N-acetyl-alpha-D-galactosamine = a ganglioside GM2 (d18:1(4E)) + UDP + H(+). It carries out the reaction a ganglioside GM3 + UDP-N-acetyl-alpha-D-galactosamine = a ganglioside GM2 + UDP + H(+). The catalysed reaction is a ganglioside GD3 + UDP-N-acetyl-alpha-D-galactosamine = a ganglioside GD2 + UDP + H(+). It catalyses the reaction a ganglioside GD3 (d18:1(4E)) + UDP-N-acetyl-alpha-D-galactosamine = a ganglioside GD2 (d18:1(4E)) + UDP + H(+). The enzyme catalyses a beta-D-Gal-(1-&gt;4)-beta-D-Glc-(1&lt;-&gt;1)-Cer(d18:1(4E)) + UDP-N-acetyl-alpha-D-galactosamine = a ganglioside GA2 (d18:1(4E)) + UDP + H(+). It carries out the reaction a ganglioside GD1a + UDP-N-acetyl-alpha-D-galactosamine = a ganglioside GalNAc-GD1a + UDP + H(+). The catalysed reaction is a ganglioside GT3 (d18:1(4E)) + UDP-N-acetyl-alpha-D-galactosamine = a ganglioside GT2 (d18:1(4E)) + UDP + H(+). It catalyses the reaction a beta-D-galactosyl-(1-&gt;4)-beta-D-glucosyl-(1&lt;-&gt;1)-ceramide + UDP-N-acetyl-alpha-D-galactosamine = a ganglioside GA2 + UDP + H(+). The enzyme catalyses a neolactoside IV(3)-alpha-NeuGc-nLc4Cer + UDP-N-acetyl-alpha-D-galactosamine = a neolactoside IV(4)-beta-GalNAc-IV(3)-alpha-NeuGc-nLc4Cer + UDP + H(+). The protein operates within sphingolipid metabolism. Its function is as follows. Involved in the biosynthesis of gangliosides GM2, GD2, GT2 and GA2 from GM3, GD3, GT3 and GA3, respectively. The chain is Beta-1,4 N-acetylgalactosaminyltransferase 1 from Homo sapiens (Human).